We begin with the raw amino-acid sequence, 227 residues long: 2-C-methyl-D-erythritol 4-phosphate cytidylyltransferase (227 aa).

It belongs to the IspD/TarI cytidylyltransferase family. IspD subfamily.

The enzyme catalyses 2-C-methyl-D-erythritol 4-phosphate + CTP + H(+) = 4-CDP-2-C-methyl-D-erythritol + diphosphate. It functions in the pathway isoprenoid biosynthesis; isopentenyl diphosphate biosynthesis via DXP pathway; isopentenyl diphosphate from 1-deoxy-D-xylulose 5-phosphate: step 2/6. Functionally, catalyzes the formation of 4-diphosphocytidyl-2-C-methyl-D-erythritol from CTP and 2-C-methyl-D-erythritol 4-phosphate (MEP). The polypeptide is 2-C-methyl-D-erythritol 4-phosphate cytidylyltransferase (Tolumonas auensis (strain DSM 9187 / NBRC 110442 / TA 4)).